Reading from the N-terminus, the 245-residue chain is 3-deoxy-manno-octulosonate cytidylyltransferase (245 aa).

This sequence belongs to the KdsB family.

Its subcellular location is the cytoplasm. It catalyses the reaction 3-deoxy-alpha-D-manno-oct-2-ulosonate + CTP = CMP-3-deoxy-beta-D-manno-octulosonate + diphosphate. Its pathway is nucleotide-sugar biosynthesis; CMP-3-deoxy-D-manno-octulosonate biosynthesis; CMP-3-deoxy-D-manno-octulosonate from 3-deoxy-D-manno-octulosonate and CTP: step 1/1. The protein operates within bacterial outer membrane biogenesis; lipopolysaccharide biosynthesis. Activates KDO (a required 8-carbon sugar) for incorporation into bacterial lipopolysaccharide in Gram-negative bacteria. This is 3-deoxy-manno-octulosonate cytidylyltransferase from Rhodopseudomonas palustris (strain HaA2).